The primary structure comprises 96 residues: Neutrophil defensin 8 (96 aa).

The signal sequence occupies residues 1–19 (MRTLVILAAILLVALQAQA). Residues 20-66 (EPLQARTDEATAAQEQIPTDNPEVVVSLAWDESLAPKDSVPGLRKNM) constitute a propeptide that is removed on maturation. Cystine bridges form between cysteine 68–cysteine 96, cysteine 70–cysteine 85, and cysteine 75–cysteine 95.

Belongs to the alpha-defensin family.

It localises to the secreted. In terms of biological role, probable antibiotic and antifungal activity. This is Neutrophil defensin 8 from Macaca mulatta (Rhesus macaque).